The primary structure comprises 101 residues: Chaperone modulatory protein CbpM (101 aa).

It belongs to the CbpM family.

Interacts with CbpA and inhibits both the DnaJ-like co-chaperone activity and the DNA binding activity of CbpA. Together with CbpA, modulates the activity of the DnaK chaperone system. Does not inhibit the co-chaperone activity of DnaJ. This is Chaperone modulatory protein CbpM from Pseudomonas entomophila (strain L48).